A 376-amino-acid polypeptide reads, in one-letter code: Coatomer subunit delta-4 (376 aa).

Positions 65–92 (LNTDTDTFTSRPKGRTSGGTTGAGKGIG) are disordered. Positions 80 to 92 (TSGGTTGAGKGIG) are enriched in gly residues. The region spanning 134–376 (SDPVTVAVEE…RLVADNYQVV (243 aa)) is the MHD domain.

The protein belongs to the adaptor complexes medium subunit family. Delta-COP subfamily. As to quaternary structure, oligomeric complex that consists of at least the alpha, beta, beta', gamma, delta, epsilon and zeta subunits.

The protein localises to the cytoplasm. It localises to the golgi apparatus membrane. Its subcellular location is the cytoplasmic vesicle. It is found in the COPI-coated vesicle membrane. Its function is as follows. The coatomer is a cytosolic protein complex that binds to dilysine motifs and reversibly associates with Golgi non-clathrin-coated vesicles, which further mediate biosynthetic protein transport from the ER, via the Golgi up to the trans Golgi network. Coatomer complex is required for budding from Golgi membranes, and is essential for the retrograde Golgi-to-ER transport of dilysine-tagged proteins. This is Coatomer subunit delta-4 from Oryza sativa subsp. japonica (Rice).